Here is a 599-residue protein sequence, read N- to C-terminus: Putative sensor histidine kinase NtrY-like (599 aa).

The next 4 membrane-spanning stretches (helical) occupy residues 17-37 (ILIL…FYVI), 44-64 (FSTI…LGIL), 85-105 (IVIA…VFSV), and 285-305 (IMFI…GVLF). Residues 307 to 361 (AKIVKPIKKLVTATDKVKDGDLTVQVPENEVDKDEIGTLYAAFNRMIKQLSRQQR) form the HAMP domain. Residues 378–589 (KVAHEIKNPL…IIDIKFDLKE (212 aa)) enclose the Histidine kinase domain. A Phosphohistidine; by autocatalysis modification is found at histidine 381.

It is found in the cell membrane. It carries out the reaction ATP + protein L-histidine = ADP + protein N-phospho-L-histidine.. In terms of biological role, member of the two-component regulatory system RP614/RP562. This chain is Putative sensor histidine kinase NtrY-like, found in Rickettsia prowazekii (strain Madrid E).